A 251-amino-acid chain; its full sequence is Electron transfer flavoprotein subunit beta, mitochondrial (251 aa).

It belongs to the ETF beta-subunit/FixA family. In terms of assembly, heterodimer of an alpha and a beta subunit. FAD serves as cofactor. AMP is required as a cofactor.

Its subcellular location is the mitochondrion matrix. The electron transfer flavoprotein serves as a specific electron acceptor for several dehydrogenases, including five acyl-CoA dehydrogenases, glutaryl-CoA and sarcosine dehydrogenase. It transfers the electrons to the main mitochondrial respiratory chain via ETF-ubiquinone oxidoreductase (ETF dehydrogenase). Involved in leucine catabolism and in phytol degradation. This is Electron transfer flavoprotein subunit beta, mitochondrial (ETFB) from Arabidopsis thaliana (Mouse-ear cress).